Here is a 436-residue protein sequence, read N- to C-terminus: Amino acid transporter AVT3C (436 aa).

The segment covering 1–13 (MGFQNEASSSSYT) has biased composition (polar residues). Residues 1 to 21 (MGFQNEASSSSYTLKIPPPAR) are disordered. The Cytoplasmic portion of the chain corresponds to 1–38 (MGFQNEASSSSYTLKIPPPAREDSPLLGKGPPLSSQFK). Residues 39-59 (TFANVFIAVVGAGVLGLPYAF) form a helical membrane-spanning segment. Residues 60-65 (KRTGWL) are Vacuolar-facing. Residues 66–86 (MGVLLLVSVSVLTHHCMMLLV) traverse the membrane as a helical segment. Topologically, residues 87–118 (YTRRKLDSFNAGISKIGSFGDLGFAVCGSLGR) are cytoplasmic. A helical transmembrane segment spans residues 119 to 139 (IVVDLFIILSQAGFCVGYLIF). The Vacuolar portion of the chain corresponds to 140–166 (IGTTLANLSDPESPTSLRHQFTRLGSE). Residues 167–187 (FLGVSSKSLYIWGCFPFQLGL) form a helical membrane-spanning segment. At 188–195 (NSIKTLTH) the chain is on the cytoplasmic side. The helical transmembrane segment at 196-216 (LAPLSIFADIVDLGAMAVVIV) threads the bilayer. The Vacuolar segment spans residues 217 to 228 (EDSMIILKQRPD). Residues 229–249 (VVAFGGMSLFLYGMGVAVYSF) traverse the membrane as a helical segment. The Cytoplasmic segment spans residues 250–273 (EGVGMVLPLESEMKDKDKFGKVLA). Residues 274-294 (LGMGFISLIYIAFGILGYLAF) form a helical membrane-spanning segment. The Vacuolar segment spans residues 295–309 (GEDTMDIITANLGAG). A helical membrane pass occupies residues 310–330 (LVSTVVQLGLCINLFFTFPLM). The Cytoplasmic segment spans residues 331-352 (MNPVFEIVERRFSRGMYSAWLR). A helical membrane pass occupies residues 353-373 (WVLVLAVTLVALFVPNFADFL). Residues 374–376 (SLV) lie on the Vacuolar side of the membrane. Residues 377 to 397 (GSSTCCVLGFVLPALFHLLVF) form a helical membrane-spanning segment. Over 398–411 (KEEMGWLQWSSDTA) the chain is Cytoplasmic. The helical transmembrane segment at 412–432 (IVVLGVVLAVSGTWSSLSEIF) threads the bilayer. Residues 433–436 (SVKV) are Vacuolar-facing.

It belongs to the amino acid/polyamine transporter 2 family. Amino acid/auxin permease (AAAP) (TC 2.A.18.8) subfamily. Ubiquitous.

The protein localises to the vacuole membrane. Functionally, translocates preferentially neutral amino acids from the vacuole to the cytoplasm. The sequence is that of Amino acid transporter AVT3C from Arabidopsis thaliana (Mouse-ear cress).